The sequence spans 33 residues: Cytochrome b6-f complex subunit 8 (33 aa).

Residues 2 to 22 (LFTFAWASLAAIFTFSIAMVV) traverse the membrane as a helical segment.

The protein belongs to the PetN family. The 4 large subunits of the cytochrome b6-f complex are cytochrome b6, subunit IV (17 kDa polypeptide, PetD), cytochrome f and the Rieske protein, while the 4 small subunits are PetG, PetL, PetM and PetN. The complex functions as a dimer.

The protein localises to the cellular thylakoid membrane. In terms of biological role, component of the cytochrome b6-f complex, which mediates electron transfer between photosystem II (PSII) and photosystem I (PSI), cyclic electron flow around PSI, and state transitions. In Prochlorococcus marinus (strain MIT 9211), this protein is Cytochrome b6-f complex subunit 8.